A 370-amino-acid chain; its full sequence is 4-hydroxy-3-methylbut-2-en-1-yl diphosphate synthase (flavodoxin) (370 aa).

[4Fe-4S] cluster contacts are provided by Cys270, Cys273, Cys305, and Glu312.

Belongs to the IspG family. [4Fe-4S] cluster is required as a cofactor.

It catalyses the reaction (2E)-4-hydroxy-3-methylbut-2-enyl diphosphate + oxidized [flavodoxin] + H2O + 2 H(+) = 2-C-methyl-D-erythritol 2,4-cyclic diphosphate + reduced [flavodoxin]. It participates in isoprenoid biosynthesis; isopentenyl diphosphate biosynthesis via DXP pathway; isopentenyl diphosphate from 1-deoxy-D-xylulose 5-phosphate: step 5/6. Its function is as follows. Converts 2C-methyl-D-erythritol 2,4-cyclodiphosphate (ME-2,4cPP) into 1-hydroxy-2-methyl-2-(E)-butenyl 4-diphosphate. The sequence is that of 4-hydroxy-3-methylbut-2-en-1-yl diphosphate synthase (flavodoxin) from Saccharophagus degradans (strain 2-40 / ATCC 43961 / DSM 17024).